Here is a 41-residue protein sequence, read N- to C-terminus: Large ribosomal subunit protein bL36B (41 aa).

This sequence belongs to the bacterial ribosomal protein bL36 family.

The protein is Large ribosomal subunit protein bL36B of Neisseria meningitidis serogroup C (strain 053442).